Reading from the N-terminus, the 150-residue chain is Transcription antitermination protein NusB (150 aa).

Belongs to the NusB family.

In terms of biological role, involved in transcription antitermination. Required for transcription of ribosomal RNA (rRNA) genes. Binds specifically to the boxA antiterminator sequence of the ribosomal RNA (rrn) operons. The sequence is that of Transcription antitermination protein NusB from Alcanivorax borkumensis (strain ATCC 700651 / DSM 11573 / NCIMB 13689 / SK2).